We begin with the raw amino-acid sequence, 851 residues long: DNA mismatch repair protein MutS (851 aa).

602–609 serves as a coordination point for ATP; that stretch reads GPNMSGKS.

The protein belongs to the DNA mismatch repair MutS family.

This protein is involved in the repair of mismatches in DNA. It is possible that it carries out the mismatch recognition step. This protein has a weak ATPase activity. The polypeptide is DNA mismatch repair protein MutS (Streptococcus pyogenes serotype M2 (strain MGAS10270)).